The chain runs to 570 residues: Dwarfin sma-4 (570 aa).

The tract at residues S115–P134 is disordered. A compositionally biased stretch (pro residues) spans Q121–P134. Residues Q150–T273 form the MH1 domain. Zn(2+) is bound by residues C203, C247, C258, and H263. An MH2 domain is found at W350 to S570.

It belongs to the dwarfin/SMAD family.

Its subcellular location is the cytoplasm. The protein resides in the nucleus. In terms of biological role, involved in TGF-beta pathway. The chain is Dwarfin sma-4 (sma-4) from Caenorhabditis elegans.